We begin with the raw amino-acid sequence, 332 residues long: 3'(2'),5'-bisphosphate nucleotidase (332 aa).

Asp49 (proton acceptor) is an active-site residue. Glu73, Asp129, Ile131, and Asp132 together coordinate Mg(2+). Thr134 serves as the catalytic Proton acceptor. Residues Thr134, Ser245, Lys248, Arg262, and Asp274 each contribute to the adenosine 3',5'-bisphosphate site. The AMP site is built by Ser245, Lys248, Arg262, and Asp274. Asp274 is a Mg(2+) binding site.

The protein belongs to the inositol monophosphatase superfamily. It depends on Mg(2+) as a cofactor.

It catalyses the reaction 3'-phosphoadenylyl sulfate + H2O = adenosine 5'-phosphosulfate + phosphate. The catalysed reaction is adenosine 3',5'-bisphosphate + H2O = AMP + phosphate. The enzyme catalyses adenosine 2',5'-bisphosphate + H2O = AMP + phosphate. It carries out the reaction 1D-myo-inositol 1,4-bisphosphate + H2O = 1D-myo-inositol 4-phosphate + phosphate. It catalyses the reaction 1D-myo-inositol 1,3,4-trisphosphate + H2O = 1D-myo-inositol 3,4-bisphosphate + phosphate. Functionally, phosphatase that converts adenosine 3'-phosphate 5'-phosphosulfate (PAPS) to adenosine 5'-phosphosulfate (APS) and 3'(2')-phosphoadenosine 5'-phosphate (PAP) to AMP. Is also able to hydrolyze inositol 1,4-bisphosphate and inositol 1,3,4-trisphosphate. The protein is 3'(2'),5'-bisphosphate nucleotidase of Dictyostelium discoideum (Social amoeba).